The sequence spans 353 residues: MKKIGFFIMNIGSAGGTERVSINVANALAKQGYDVSFISIGGNKPFFQVDEKINIYAMNKLPYSLKKDYFSITKKLRELVKELQLDTLIVVDGAIMLFSALALVNLNIKHILWEHYSFNFTGNRLVRTLGKYLAVTTCDKIVTLTEAEKTLWQEKFKTNNIISIANPNTLLPKNKLAKLENKTILSVGHLFSYKGFDYLLKVWQVLAKKYPDWNLKIVGSGEEEENLKNLAKALDIEDSVNFIPRTNDVSFYYESSSIYCLPSQTEGLPLVVIEAMAFGLPIVAFNCSPGVKQLVEHKENGFLCEQNNIEEMVKGLDLLINNPELYLQMSDKSRLMSEDYGIEKIIEEWKGIL.

The chain crosses the membrane as a helical span at residues 267–287; the sequence is GLPLVVIEAMAFGLPIVAFNC.

It belongs to the glycosyltransferase group 1 family. Glycosyltransferase 4 subfamily.

The protein resides in the membrane. This is an uncharacterized protein from Haemophilus influenzae (strain ATCC 51907 / DSM 11121 / KW20 / Rd).